The primary structure comprises 1377 residues: DNA-directed RNA polymerase subunit beta (1377 aa).

It belongs to the RNA polymerase beta chain family. In terms of assembly, the RNAP catalytic core consists of 2 alpha, 1 beta, 1 beta' and 1 omega subunit. When a sigma factor is associated with the core the holoenzyme is formed, which can initiate transcription.

The enzyme catalyses RNA(n) + a ribonucleoside 5'-triphosphate = RNA(n+1) + diphosphate. DNA-dependent RNA polymerase catalyzes the transcription of DNA into RNA using the four ribonucleoside triphosphates as substrates. In Brucella canis (strain ATCC 23365 / NCTC 10854 / RM-666), this protein is DNA-directed RNA polymerase subunit beta.